The chain runs to 66 residues: Large ribosomal subunit protein bL35 (66 aa).

The protein belongs to the bacterial ribosomal protein bL35 family.

This is Large ribosomal subunit protein bL35 from Jannaschia sp. (strain CCS1).